Consider the following 1133-residue polypeptide: uncharacterized protein (1133 aa).

Disordered regions lie at residues 33-83, 305-629, 679-723, and 736-817; these read QFED…NSSS, PVSN…NSNS, GKLD…SVKR, and IESP…SEEV. Positions 39–83 are enriched in low complexity; it reads NNNNSNNNNNNNNSNNNNSNNNENINRKTGSTLLSSSTSQLNSSS. Positions 40–308 form a DNA-binding region, NDT80; sequence NNNSNNNNNN…GHPTCNPVSN (269 aa). Residues 305-316 are compositionally biased toward polar residues; the sequence is PVSNNPSTPGTP. Low complexity predominate over residues 317-384; the sequence is ISNFDSSNNN…NNNSSGNSSS (68 aa). Positions 401 to 417 are enriched in polar residues; it reads INSLSNHNSPHLTPIQY. Positions 418–452 are enriched in low complexity; that stretch reads NNNNNNSNNNSNNNNNNNNNNNNSNNNNNNSNNNN. Positions 453-470 are enriched in polar residues; the sequence is HQFQSNNRIFKGNLSNPF. 2 stretches are compositionally biased toward low complexity: residues 473–615 and 686–714; these read NYSQ…GNNS and NNSNNNSSNNNNSNNNSSNNNSNNNNNNN. A compositionally biased stretch (polar residues) spans 736–747; it reads IESPQSYISSPT. Residues 757-771 are compositionally biased toward pro residues; sequence QPQPQPQPQPQPQPQ. The segment covering 772-808 has biased composition (low complexity); that stretch reads PQSQSQSQSQSQSQSQSQSQSQSQPIQQIVQQQLSSP. Positions 909–1020 constitute a Peptidase S74 domain; sequence SDKRVKENVK…KKVDNVCMEL (112 aa). Residues 1055-1075 traverse the membrane as a helical segment; the sequence is IFIGIGVFTLFVIFGLVAVSI. A disordered region spans residues 1107–1133; sequence SGSNSCYDSSSNSAIDTTTSTGSGSIK.

It is found in the membrane. This is an uncharacterized protein from Dictyostelium discoideum (Social amoeba).